Here is a 183-residue protein sequence, read N- to C-terminus: MSIEALRARLPDYAHDLGTNLALLVDDPALDPEARWGCFVASACAVGEPQTLRAIDAAATAAGLTAEANRAARKAAAMMAMTNVYFRAVHLMEGAAYQALPCRLRLNRLAHAGARGVTYDLSCVAVSAINGCGACLDSHEADLRGRGVEPTQIQAALRIAAVVSAVARTLAAEAALHPQNLEI.

C132 functions as the Proton donor in the catalytic mechanism. The cysteines at positions 132 and 135 are disulfide-linked. Residue C135 is the Cysteine sulfenic acid (-SOH) intermediate of the active site.

It belongs to the AhpD family.

The catalysed reaction is N(6)-[(R)-dihydrolipoyl]-L-lysyl-[lipoyl-carrier protein] + a hydroperoxide = N(6)-[(R)-lipoyl]-L-lysyl-[lipoyl-carrier protein] + an alcohol + H2O. In terms of biological role, antioxidant protein with alkyl hydroperoxidase activity. Required for the reduction of the AhpC active site cysteine residues and for the regeneration of the AhpC enzyme activity. This chain is Alkyl hydroperoxide reductase AhpD, found in Caulobacter vibrioides (strain ATCC 19089 / CIP 103742 / CB 15) (Caulobacter crescentus).